Reading from the N-terminus, the 833-residue chain is MKVVFVIFFFFLFQFCISVDTIMRRQSLRDGEVILSAGKRFAFGFFSLGDSELRYVGIWYAQISQQTIVWVANRDHPINDTSGMVKFSNRGNLSVYASDNETELIWSTNVSDSMLEPTLVATLSDLGNLVLFDPVTGRSFWESFDHPTDTFLPFMRLGFTRKDGLDRSLTSWKSHGDPGSGDLILRMERRGFPQLILYKGVTPWWRMGSWTGHRWSGVPEMPIGYIFNNSFVNNEDEVSFTYGVTDASVITRTMVNETGTMHRFTWIARDKRWNDFWSVPKEQCDNYAHCGPNGYCDSPSSKTFECTCLPGFEPKFPRHWFLRDSSGGCTKKKRASICSEKDGFVKLKRMKIPDTSDASVDMNITLKECKQRCLKNCSCVAYASAYHESKRGAIGCLKWHGGMLDARTYLNSGQDFYIRVDKEELARWNRNGLSGKRRVLLILISLIAAVMLLTVILFCVVRERRKSNRHRSSSANFAPVPFDFDESFRFEQDKARNRELPLFDLNTIVAATNNFSSQNKLGAGGFGPVYKGVLQNRMEIAVKRLSRNSGQGMEEFKNEVKLISKLQHRNLVRILGCCVELEEKMLVYEYLPNKSLDYFIFHEEQRAELDWPKRMEIVRGIARGILYLHQDSRLRIIHRDLKASNILLDSEMIPKISDFGMARIFGGNQMEGCTSRVVGTFGYMAPEYAMEGQFSIKSDVYSFGVLMLEIITGKKNSAFHEESSNLVGHIWDLWENGEATEIIDNLMDQETYDEREVMKCIQIGLLCVQENASDRVDMSSVVIMLGHNATNLPNPKHPAFTSARRRGGENGACLKGQTGISVNDVTFSDIQGR.

The N-terminal stretch at 1-18 is a signal peptide; sequence MKVVFVIFFFFLFQFCIS. Positions 19–144 constitute a Bulb-type lectin domain; that stretch reads VDTIMRRQSL…VTGRSFWESF (126 aa). Residues 19–440 lie on the Extracellular side of the membrane; it reads VDTIMRRQSL…NGLSGKRRVL (422 aa). N-linked (GlcNAc...) asparagine glycans are attached at residues asparagine 79, asparagine 92, asparagine 100, asparagine 109, asparagine 228, and asparagine 256. In terms of domain architecture, EGF-like spans 280–330; the sequence is PKEQCDNYAHCGPNGYCDSPSSKTFECTCLPGFEPKFPRHWFLRDSSGGCT. 3 disulfide bridges follow: cysteine 284–cysteine 296, cysteine 290–cysteine 306, and cysteine 308–cysteine 329. In terms of domain architecture, PAN spans 338-421; the sequence is CSEKDGFVKL…SGQDFYIRVD (84 aa). N-linked (GlcNAc...) asparagine glycans are attached at residues asparagine 363 and asparagine 376. 2 disulfides stabilise this stretch: cysteine 369–cysteine 396 and cysteine 373–cysteine 379. A helical membrane pass occupies residues 441 to 461; the sequence is LILISLIAAVMLLTVILFCVV. The Cytoplasmic portion of the chain corresponds to 462 to 833; that stretch reads RERRKSNRHR…DVTFSDIQGR (372 aa). The region spanning 515-800 is the Protein kinase domain; it reads FSSQNKLGAG…NLPNPKHPAF (286 aa). Residues 521–529 and lysine 543 each bind ATP; that span reads LGAGGFGPV. Phosphoserine is present on residues serine 549 and serine 564. A caM-binding region spans residues 604–621; it reads EQRAELDWPKRMEIVRGI. Aspartate 640 acts as the Proton acceptor in catalysis. 2 positions are modified to phosphoserine: serine 644 and serine 657. Threonine 674 bears the Phosphothreonine mark. A phosphoserine mark is found at serine 717 and serine 821.

Belongs to the protein kinase superfamily. Ser/Thr protein kinase family.

The protein resides in the cell membrane. The catalysed reaction is L-seryl-[protein] + ATP = O-phospho-L-seryl-[protein] + ADP + H(+). The enzyme catalyses L-threonyl-[protein] + ATP = O-phospho-L-threonyl-[protein] + ADP + H(+). This Arabidopsis thaliana (Mouse-ear cress) protein is G-type lectin S-receptor-like serine/threonine-protein kinase RKS1 (RKS1).